The chain runs to 792 residues: Endonuclease MutS2 (792 aa).

334–341 (GPNTGGKT) contributes to the ATP binding site. A Smr domain is found at 717 to 792 (INLIGKTTDE…DAGVTIATFK (76 aa)).

Belongs to the DNA mismatch repair MutS family. MutS2 subfamily. In terms of assembly, homodimer. Binds to stalled ribosomes, contacting rRNA.

Functionally, endonuclease that is involved in the suppression of homologous recombination and thus may have a key role in the control of bacterial genetic diversity. In terms of biological role, acts as a ribosome collision sensor, splitting the ribosome into its 2 subunits. Detects stalled/collided 70S ribosomes which it binds and splits by an ATP-hydrolysis driven conformational change. Acts upstream of the ribosome quality control system (RQC), a ribosome-associated complex that mediates the extraction of incompletely synthesized nascent chains from stalled ribosomes and their subsequent degradation. Probably generates substrates for RQC. The chain is Endonuclease MutS2 from Agathobacter rectalis (strain ATCC 33656 / DSM 3377 / JCM 17463 / KCTC 5835 / VPI 0990) (Eubacterium rectale).